A 968-amino-acid chain; its full sequence is Isoleucine--tRNA ligase (968 aa).

The 'HIGH' region signature appears at 68–78 (PYANGALHMGH). E584 is an L-isoleucyl-5'-AMP binding site. Positions 625–629 (KMSKS) match the 'KMSKS' region motif. K628 is a binding site for ATP. Residues C938, C941, C958, and C961 each contribute to the Zn(2+) site.

It belongs to the class-I aminoacyl-tRNA synthetase family. IleS type 1 subfamily. Monomer. Zn(2+) is required as a cofactor.

It is found in the cytoplasm. It carries out the reaction tRNA(Ile) + L-isoleucine + ATP = L-isoleucyl-tRNA(Ile) + AMP + diphosphate. Functionally, catalyzes the attachment of isoleucine to tRNA(Ile). As IleRS can inadvertently accommodate and process structurally similar amino acids such as valine, to avoid such errors it has two additional distinct tRNA(Ile)-dependent editing activities. One activity is designated as 'pretransfer' editing and involves the hydrolysis of activated Val-AMP. The other activity is designated 'posttransfer' editing and involves deacylation of mischarged Val-tRNA(Ile). The chain is Isoleucine--tRNA ligase from Synechococcus sp. (strain CC9311).